We begin with the raw amino-acid sequence, 316 residues long: 4-hydroxy-3-methylbut-2-enyl diphosphate reductase (316 aa).

Cysteine 12 contacts [4Fe-4S] cluster. (2E)-4-hydroxy-3-methylbut-2-enyl diphosphate-binding residues include histidine 41 and histidine 74. The dimethylallyl diphosphate site is built by histidine 41 and histidine 74. Isopentenyl diphosphate contacts are provided by histidine 41 and histidine 74. Cysteine 96 contacts [4Fe-4S] cluster. Histidine 124 is a binding site for (2E)-4-hydroxy-3-methylbut-2-enyl diphosphate. A dimethylallyl diphosphate-binding site is contributed by histidine 124. Position 124 (histidine 124) interacts with isopentenyl diphosphate. The active-site Proton donor is glutamate 126. Threonine 169 is a (2E)-4-hydroxy-3-methylbut-2-enyl diphosphate binding site. Cysteine 199 is a [4Fe-4S] cluster binding site. (2E)-4-hydroxy-3-methylbut-2-enyl diphosphate-binding residues include serine 227, serine 228, asparagine 229, and serine 271. Residues serine 227, serine 228, asparagine 229, and serine 271 each contribute to the dimethylallyl diphosphate site. Positions 227, 228, 229, and 271 each coordinate isopentenyl diphosphate.

Belongs to the IspH family. [4Fe-4S] cluster serves as cofactor.

The enzyme catalyses isopentenyl diphosphate + 2 oxidized [2Fe-2S]-[ferredoxin] + H2O = (2E)-4-hydroxy-3-methylbut-2-enyl diphosphate + 2 reduced [2Fe-2S]-[ferredoxin] + 2 H(+). It carries out the reaction dimethylallyl diphosphate + 2 oxidized [2Fe-2S]-[ferredoxin] + H2O = (2E)-4-hydroxy-3-methylbut-2-enyl diphosphate + 2 reduced [2Fe-2S]-[ferredoxin] + 2 H(+). It functions in the pathway isoprenoid biosynthesis; dimethylallyl diphosphate biosynthesis; dimethylallyl diphosphate from (2E)-4-hydroxy-3-methylbutenyl diphosphate: step 1/1. The protein operates within isoprenoid biosynthesis; isopentenyl diphosphate biosynthesis via DXP pathway; isopentenyl diphosphate from 1-deoxy-D-xylulose 5-phosphate: step 6/6. In terms of biological role, catalyzes the conversion of 1-hydroxy-2-methyl-2-(E)-butenyl 4-diphosphate (HMBPP) into a mixture of isopentenyl diphosphate (IPP) and dimethylallyl diphosphate (DMAPP). Acts in the terminal step of the DOXP/MEP pathway for isoprenoid precursor biosynthesis. The protein is 4-hydroxy-3-methylbut-2-enyl diphosphate reductase of Stenotrophomonas maltophilia (strain R551-3).